We begin with the raw amino-acid sequence, 696 residues long: Methionine synthase reductase (696 aa).

The 144-residue stretch at 4 to 147 (FLLLYATQRG…VVEPWIDGLW (144 aa)) folds into the Flavodoxin-like domain. FMN is bound by residues 10–14 (TQRGQ) and 93–124 (LLGL…QRFY). Positions 166 to 245 (TLSRASDAPL…SSLSIPAVPP (80 aa)) are hinge. 2 positions are modified to phosphoserine: S171 and S188. The 263-residue stretch at 269-531 (DPSFQVPISK…PRATNAFHLP (263 aa)) folds into the FAD-binding FR-type domain. Residue K289 participates in NADP(+) binding. FAD is bound by residues 449-452 (RPYS) and 485-488 (GVCT). NADP(+)-binding positions include 608–609 (SR), 622–624 (YVQ), and D657. Residue W695 coordinates FAD.

As to quaternary structure, forms a multiprotein complex with MMACHC, MMADHC and MTR. It depends on FAD as a cofactor. FMN is required as a cofactor.

Its subcellular location is the cytoplasm. It carries out the reaction 2 methylcob(III)alamin-[methionine synthase] + 2 S-adenosyl-L-homocysteine + NADP(+) + H(+) = 2 cob(II)alamin-[methionine synthase] + 2 S-adenosyl-L-methionine + NADPH. The enzyme catalyses 2 cob(II)alamin + A + 2 H2O + 2 H(+) = 2 aquacob(III)alamin + AH2. In terms of biological role, key enzyme in methionine and folate homeostasis responsible for the reactivation of methionine synthase (MTR/MS) activity by catalyzing the reductive methylation of MTR-bound cob(II)alamin. Cobalamin (vitamin B12) forms a complex with MTR to serve as an intermediary in methyl transfer reactions that cycles between MTR-bound methylcob(III)alamin and MTR bound-cob(I)alamin forms, and occasional oxidative escape of the cob(I)alamin intermediate during the catalytic cycle leads to the inactive cob(II)alamin species. The processing of cobalamin in the cytosol occurs in a multiprotein complex composed of at least MMACHC, MMADHC, MTRR and MTR which may contribute to shuttle safely and efficiently cobalamin towards MTR in order to produce methionine. Also necessary for the utilization of methyl groups from the folate cycle, thereby affecting transgenerational epigenetic inheritance. Also acts as a molecular chaperone for methionine synthase by stabilizing apoMTR and incorporating methylcob(III)alamin into apoMTR to form the holoenzyme. Also serves as an aquacob(III)alamin reductase by reducing aquacob(III)alamin to cob(II)alamin; this reduction leads to stimulation of the conversion of apoMTR and aquacob(III)alamin to MTR holoenzyme. This Mus musculus (Mouse) protein is Methionine synthase reductase.